The primary structure comprises 436 residues: GTPase Der (436 aa).

2 consecutive EngA-type G domains span residues 4 to 167 and 175 to 351; these read PTIA…PNEY and IKFS…ESQN. GTP is bound by residues 10 to 17, 57 to 61, 119 to 122, 181 to 188, 229 to 233, and 294 to 297; these read GRPNVGKS, DTGGI, NKVD, DTAGM, and NKWD. The KH-like domain occupies 352-436; the sequence is TRIPSAVLND…PIHLIARKRK (85 aa).

The protein belongs to the TRAFAC class TrmE-Era-EngA-EngB-Septin-like GTPase superfamily. EngA (Der) GTPase family. In terms of assembly, associates with the 50S ribosomal subunit.

Functionally, GTPase that plays an essential role in the late steps of ribosome biogenesis. The chain is GTPase Der from Streptococcus pneumoniae (strain JJA).